The sequence spans 96 residues: Small ribosomal subunit protein bS21 (96 aa).

A compositionally biased stretch (basic and acidic residues) spans 37-52; sequence EKPSEKKAREKAEAVR. The disordered stretch occupies residues 37-96; sequence EKPSEKKAREKAEAVRRARKLARKKLQREGLLPSKPKPVFGADRGRGAAGGAGGAPRPAR. Over residues 53–62 the composition is skewed to basic residues; sequence RARKLARKKL.

This sequence belongs to the bacterial ribosomal protein bS21 family.

In Afipia carboxidovorans (strain ATCC 49405 / DSM 1227 / KCTC 32145 / OM5) (Oligotropha carboxidovorans), this protein is Small ribosomal subunit protein bS21.